The following is a 110-amino-acid chain: IQ domain-containing protein J (110 aa).

The IQ domain occupies glutamate 47–leucine 67. The disordered stretch occupies residues arginine 63 to serine 99. Residues serine 76–serine 87 show a composition bias toward low complexity. Residues methionine 88 to serine 99 are compositionally biased toward polar residues.

In Mus musculus (Mouse), this protein is IQ domain-containing protein J.